A 489-amino-acid chain; its full sequence is GTPase Der (489 aa).

EngA-type G domains follow at residues 3 to 166 (PVIA…PKDE) and 195 to 368 (IKIA…KSAV). GTP-binding positions include 9 to 16 (GRPNVGKS), 56 to 60 (DTGGI), 118 to 121 (NKID), 201 to 208 (GRPNVGKS), 248 to 252 (DTAGV), and 313 to 316 (NKWD). Residues 369 to 453 (TRWPTSRLTQ…PIRIEFKGGE (85 aa)) enclose the KH-like domain. Residues 451 to 489 (GGENPYEGNKNTLTDRQVNKKRRMMSHHKKADKKRRDKR) are disordered. Over residues 469 to 489 (NKKRRMMSHHKKADKKRRDKR) the composition is skewed to basic residues.

Belongs to the TRAFAC class TrmE-Era-EngA-EngB-Septin-like GTPase superfamily. EngA (Der) GTPase family. Associates with the 50S ribosomal subunit.

Its function is as follows. GTPase that plays an essential role in the late steps of ribosome biogenesis. The protein is GTPase Der of Pseudomonas syringae pv. tomato (strain ATCC BAA-871 / DC3000).